We begin with the raw amino-acid sequence, 3259 residues long: MQKARGTRGEDAGTRAPPSPGVPPKRAKVGAGRGVLVTGAGAGAPVFLRPLKNAAVCAGSDVRLRVVVSGTPEPSLSWFRDGQLLPTPVPEPSCLWLRNCGAQDAGVYSCSAQNERGKASCEAVLTVLEVRDSETAEDDISDVPGTQRLELRDDRAFSTPTGGSDTLVGTSLDTPPTSVTGTSEEQVSWWGSGQTVLEQEAGSGGGTRPLPGSPRQAQTTGAGPRHLGVEPLVRASRANLVGASWGSEDSLSVASDLYGSAFSLYRGRALSIHVSIPPSGLRREEPDLQPQPASDALRPRPALPPPSKSALLPPPSPRVGKRALPGSSAQPPATPTSPHRCTQEPSLPEDITTTEEKRGKKPKSSGPSLAGTVESRPQTPLSEASGRLSALGRSPRLVRAGSRILDKLQFFEERRRSLERSDSPPAPLRPWVPLRKARSLEQPKSEGGAAWDTPGASQEELRSPRGSVAERRRLFQQKAASLDERTRQRSATSDLELRFAQELGRIRRSTSREELVRSHESLRATLQRAPSPREPGEPPLFSRPSIPKTSRAVSPAATQPPPPSGAGKSGDETGRPRSRGPVGRTEPGEGPQQEIKRRDQFPLTRSRAIQECRSPVPPFTADPPESRTKAPSARKREPPAQAVRFLPWATPGVEDSVLPQTLEKNRAGPEAEKRLRRGPEEDGPWGAWDRRGTRSQGKGRRARPTSPELESSDDSYVSAGEEPLEAPVFEIPLQNMVVAPGADVLLKCIITANPPPQVSWKKDGSVLHSEGRLLIRAEGERHTLLLREAQAADAGSYTATATNELGQASCASSLAVRPGASTSPFSSPITSDEEYLSPPEEFPEPGETWSRTPTMKPSPSQDRDSSDSSSKAPPTFKVSLMDQSVREGQDVIMSIRVQGEPKPVVSWLRNRQPVRPDQRRFAEEAEGGLCRLRILAAERGDAGFYTCKAVNEYGARQCEARLEVRAHPESRSLAVLAPLQDVDVGAGEMALFECLVAGPADVEVDWLCRGRLLQPALLKCKMHFDGRKCKLLLTSVHEDDSGVYTCKLSTVKDELTCSARLTVRPSLAPLFTRLLEDVEVLEGRAARLDCKISGTPPPSVTWTHFGHPVNESENLRLRQDGGLHSLHIARVGSEDEGLYEVSATNTHGQAHCSAQLYVEEPRTAASGPSSKLEKMPSIPEEPEHGDLERLSIPDFLRPLQDLEVGLAKEAMLECQVTGLPYPTISWFHNGHRIQSSDDRRMTQYRDIHRLVFPAVGPQHAGVYKSVIANKLGKAACYAHLYVTDVVPGPPDGAPQVVAVTGRMVTLSWNPPRSLDMAIDPDSLTYTVQHQVLGSDQWTALVTGLREPEWAATGLKKGLHHIFRVLSSSGKSSSKPSAPSEPVQLLEHGPPLEEAPAVLDKQDIVYVVEGQPACVTVTFNHVEAQVVWRSCRGALLEPRTGVYELSQPDDDQYCLRICRVSRRDLGPLTCSARNRHGTKACSITLELAEAPRFESIMEDVEVGPGETARFAVVVEGKPLPDIMWYKDEVLLAESNHVSFVYEENECSLVVLSAGSQDGGVYTCTARNLAGEVSCKAELSVHSAQTAMEVEGVGEDEEHRGRRLSDYYDIHQEIGRGAFSYLRRVVERSSGLEFAAKFIPSQAKPKASARREARLLARLQHDCVLYFHEAFERRRGLVIVTELCTEELLERMARKPTVCESETRTYMRQVLEGIGYLHQSHVLHLDVKPENLLVWDGAGGEEQVRICDFGNAQELTPGEPQYCQFGTPEFVAPEIVNQSPVSGVTDIWPVGVVAFLCLTGISPFVGENDRTTLMNIRNYNVAFEETTFLSLSREARGFLIKVLVQDRLRPTAEETLEHPWFKTEAKGAEVSTDHLKLFLSRRRWQRSQISYKCHLVLRPIPELLRAPPERVWVAMPRRQPPSGGLSSSSDSEEEELEELPSVPRPLQPEFSGSRVSLTDIPTEDEALGTPEAGAATPMDWQEQGRAPSKDQEAPSPEALPSPGQESPDGPSPRRPELRRGSSAESALPRVGSREPGRSLHKAASVELPQRRSPSPGATRLTRGGLGEGEYAQRLQALRQRLLRGGPEDGKVSGLRGPLLESLGGRARDPRMARAASSEAAPHHQPPPESRGLQKSSSFSQGEAEPRGRHRRAGAPLEIPVARLGARRLQESPSLSALSETQPPSPALPSAPKPSITKSPEPSAATSRDSPQPPAPQPVPEKIPEPKPEPVRAAKPAQPPLALQMPAQSLTPYAQIMQSLQLSSPTLSPQVPPSEPKPHAAVFARVASPPPGASEKRVPSARIPPVLAEKVRVPTVPPRPGSSLSGSIENLESEAVFEAKFKRSRESPLSRGLRLLSRSRSEERGPFRGAEDDGIYRPSPAGTPLELVRRPERSRSVQDLRVAGEPGLVRRLSLSLSQKLRRTPPGQRHPAWESRSGDGESSEGGSSARGSPVLAVRRRLSSTLERLSSRLQRSGSSEDSGGASGRSTPLFGRLRRATSEGESLRRLGVPHNQLASQTGATTPSAESLGSEASGTSGSSAPGESRSRHRWGLSRLRKDKGLSQPNLSASVQEDLGHQYVPSESDFPPVFHIKLKDQVLLEGEAATLLCLPAACPTPRISWMKDKQSLRSEPSVVIVSCKDGRQLLSIPRASKRHAGLYECSATNVLGSITSSCTVAVARTPGKLAPPEVPQTYCDTALVLWKPGDSRAPCTYTLERRVDGESVWHPVSSGIPDCYYNVTQLPVGVTVRFRVACSNRAGQGPFSNPSEKVFIRGTQDSPAQSAAAPRDAPVTSGPTRAPPPDSPTSLVPTPPLAPQVSQASTLSPSTSSMSANQALSSLKAVGPPPATPPRKHRGLLATQQAEPSPPSILVTPSEHKSFVPDTGTLTPTSSPQGVKPAPSSSSLYMVTSFVSAPPDPQPPAPEPPPEPTKVTVRSLSPAKEVVSSPTPESTTLRQGPPQKPYTFLEEKARGRFGVVRSCRENATGRTFVAKIVPYAAEGKRRVLQEYEVLRTLHHERLMSLHEAYITPRYLVLIAESCGNRELLCGLSDRFRYSEDDVATYVVQLLQGLDYLHGRHVLHLDIKPDNLLLAADNALKIVDFGSAQPYNPQALKPLGHRTGTLEFMAPEMVRGDPIGSATDIWGAGVLTYIMLSGYSPFYEPDPQETEARIVGGRFDAFQLYPNTSQSATLFLRKVLSVHPWSRPSLQDCLAHPWLQDAYLMKLRRQTLTFTTNRLKEFLGEQRRRRAEAATRHKVLLRSYPGSP.

A disordered region spans residues 1–30; the sequence is MQKARGTRGEDAGTRAPPSPGVPPKRAKVG. Position 33 is an omega-N-methylarginine (R33). The region spanning 45–126 is the Ig-like 1 domain; that stretch reads PVFLRPLKNA…GKASCEAVLT (82 aa). A Phosphoserine modification is found at S141. 4 disordered regions span residues 155–185, 198–226, 278–716, and 816–880; these read RAFS…TSEE, EQEA…GPRH, PSGL…DDSY, and VRPG…KVSL. Positions 158–185 are enriched in polar residues; the sequence is STPTGGSDTLVGTSLDTPPTSVTGTSEE. Residues 301–317 are compositionally biased toward pro residues; that stretch reads PALPPPSKSALLPPPSP. 2 positions are modified to phosphoserine: S368 and S375. T379 is modified (phosphothreonine). Residues S382 and S385 each carry the phosphoserine modification. Residues 404 to 422 show a composition bias toward basic and acidic residues; the sequence is ILDKLQFFEERRRSLERSD. The residue at position 423 (S423) is a Phosphoserine. T453 carries the post-translational modification Phosphothreonine. Phosphoserine is present on residues S457, S463, S493, S511, S531, and S554. A compositionally biased stretch (basic and acidic residues) spans 459-473; it reads EELRSPRGSVAERRR. Basic and acidic residues predominate over residues 510–522; the sequence is TSREELVRSHESL. Composition is skewed to basic and acidic residues over residues 624 to 638 and 663 to 680; these read PESR…KREP and EKNR…RGPE. The Ig-like 2 domain maps to 727-817; sequence PVFEIPLQNM…ASCASSLAVR (91 aa). Over residues 820 to 830 the composition is skewed to polar residues; it reads ASTSPFSSPIT. Ig-like domains lie at 874-963, 968-1056, and 1069-1157; these read PTFK…ARLE, PESR…DELT, and PLFT…AQLY. C994 and C1046 are joined by a disulfide. Phosphoserine is present on residues S1133 and S1177. A disordered region spans residues 1162–1185; it reads RTAASGPSSKLEKMPSIPEEPEHG. Positions 1193-1283 constitute an Ig-like 6 domain; it reads PDFLRPLQDL…AACYAHLYVT (91 aa). The Fibronectin type-III 1 domain occupies 1290-1387; it reads PDGAPQVVAV…PSEPVQLLEH (98 aa). Positions 1367 to 1379 are enriched in low complexity; sequence SSGKSSSKPSAPS. The tract at residues 1367–1386 is disordered; the sequence is SSGKSSSKPSAPSEPVQLLE. Residues 1490-1578 form the Ig-like 7 domain; the sequence is PRFESIMEDV…GEVSCKAELS (89 aa). Residues 1606–1859 form the Protein kinase 1 domain; it reads YDIHQEIGRG…AEETLEHPWF (254 aa). Residues 1612–1620 and K1635 contribute to the ATP site; that span reads IGRGAFSYL. Residue D1724 is the Proton acceptor of the active site. Disordered regions lie at residues 1913–2244, 2336–2451, and 2463–2562; these read MPRR…QMPA, AKFK…SPVL, and RLSS…SQPN. The segment covering 1918–1927 has biased composition (low complexity); it reads PPSGGLSSSS. S1993, S2004, S2019, S2020, and S2042 each carry phosphoserine. The span at 2009 to 2019 shows a compositional bias: basic and acidic residues; that stretch reads SPRRPELRRGS. R2060 is modified (asymmetric dimethylarginine; alternate). At R2060 the chain carries Omega-N-methylarginine; alternate. The span at 2069–2081 shows a compositional bias: low complexity; the sequence is AQRLQALRQRLLR. Phosphoserine occurs at positions 2114 and 2135. Omega-N-methylarginine is present on R2144. The span at 2168-2179 shows a compositional bias: polar residues; it reads ESPSLSALSETQ. Positions 2180–2189 are enriched in pro residues; it reads PPSPALPSAP. S2182 and S2207 each carry phosphoserine. Residues 2193-2207 show a composition bias toward polar residues; it reads ITKSPEPSAATSRDS. A compositionally biased stretch (pro residues) spans 2208 to 2218; sequence PQPPAPQPVPE. Residues 2219–2229 are compositionally biased toward basic and acidic residues; the sequence is KIPEPKPEPVR. Residues 2230-2244 are compositionally biased toward low complexity; it reads AAKPAQPPLALQMPA. Positions 2336–2345 are enriched in basic and acidic residues; it reads AKFKRSRESP. Over residues 2346-2355 the composition is skewed to low complexity; that stretch reads LSRGLRLLSR. Over residues 2356-2372 the composition is skewed to basic and acidic residues; sequence SRSEERGPFRGAEDDGI. Phosphoserine is present on S2376. Phosphothreonine is present on T2380. Residues 2384-2395 are compositionally biased toward basic and acidic residues; that stretch reads LVRRPERSRSVQ. Phosphoserine is present on residues S2410, S2414, S2438, S2439, S2444, and S2448. Positions 2463–2484 are enriched in low complexity; that stretch reads RLSSRLQRSGSSEDSGGASGRS. Positions 2510-2520 are enriched in polar residues; the sequence is QLASQTGATTP. A phosphoserine mark is found at S2521 and S2524. Positions 2521 to 2540 are enriched in low complexity; it reads SAESLGSEASGTSGSSAPGE. The segment covering 2543-2554 has biased composition (basic residues); sequence SRHRWGLSRLRK. S2559 carries the post-translational modification Phosphoserine. The Ig-like 8 domain maps to 2583–2673; it reads PPVFHIKLKD…GSITSSCTVA (91 aa). A disulfide bridge connects residues C2605 and C2657. The 95-residue stretch at 2680–2774 folds into the Fibronectin type-III 2 domain; it reads KLAPPEVPQT…KVFIRGTQDS (95 aa). Residue T2771 is modified to Phosphothreonine. Disordered stretches follow at residues 2771–2829 and 2855–2957; these read TQDS…MSAN and TQQA…PQKP. S2774 carries the post-translational modification Phosphoserine. Positions 2793–2810 are enriched in pro residues; sequence RAPPPDSPTSLVPTPPLA. Residues 2814 to 2828 show a composition bias toward low complexity; that stretch reads SQASTLSPSTSSMSA. Residues 2859–2965 enclose the Fibronectin type-III 3 domain; it reads EPSPPSILVT…KPYTFLEEKA (107 aa). Residues 2880-2907 show a composition bias toward polar residues; sequence GTLTPTSSPQGVKPAPSSSSLYMVTSFV. Positions 2910–2924 are enriched in pro residues; sequence PPDPQPPAPEPPPEP. Positions 2940–2950 are enriched in polar residues; sequence SSPTPESTTLR. Phosphoserine is present on S2941. The region spanning 2958 to 3210 is the Protein kinase 2 domain; sequence YTFLEEKARG…LQDCLAHPWL (253 aa). Residues 2964–2972 and K2987 contribute to the ATP site; that span reads KARGRFGVV. Catalysis depends on D3077, which acts as the Proton acceptor.

It belongs to the protein kinase superfamily. CAMK Ser/Thr protein kinase family. As to quaternary structure, interacts with MTM1. In terms of processing, may be autophosphorylated. As to expression, isoform 2 is highly expressed in differentiated arterial smooth muscle cells (ASMC) in the medial layer of the aorta. Weakly detected in brain and testis and to a lesser extent in organs rich in striated muscle or visceral smooth muscle.

The protein localises to the nucleus. It carries out the reaction L-seryl-[protein] + ATP = O-phospho-L-seryl-[protein] + ADP + H(+). It catalyses the reaction L-threonyl-[protein] + ATP = O-phospho-L-threonyl-[protein] + ADP + H(+). In terms of biological role, isoform 2 may have a role in regulating the growth and differentiation of arterial smooth muscle cells. This chain is Striated muscle-specific serine/threonine-protein kinase (Speg), found in Rattus norvegicus (Rat).